Reading from the N-terminus, the 450-residue chain is Tubulin beta chain (450 aa).

GTP-binding residues include E69, S138, G142, T143, G144, N204, and N226. Position 69 (E69) interacts with Mg(2+). Residues 427–450 (DATIDQEFEDEEEVEEQNDDSDEQ) are disordered. Acidic residues predominate over residues 430 to 450 (IDQEFEDEEEVEEQNDDSDEQ).

Belongs to the tubulin family. In terms of assembly, dimer of alpha and beta chains. A typical microtubule is a hollow water-filled tube with an outer diameter of 25 nm and an inner diameter of 15 nM. Alpha-beta heterodimers associate head-to-tail to form protofilaments running lengthwise along the microtubule wall with the beta-tubulin subunit facing the microtubule plus end conferring a structural polarity. Microtubules usually have 13 protofilaments but different protofilament numbers can be found in some organisms and specialized cells. Requires Mg(2+) as cofactor.

The protein resides in the cytoplasm. The protein localises to the cytoskeleton. Tubulin is the major constituent of microtubules, a cylinder consisting of laterally associated linear protofilaments composed of alpha- and beta-tubulin heterodimers. Microtubules grow by the addition of GTP-tubulin dimers to the microtubule end, where a stabilizing cap forms. Below the cap, tubulin dimers are in GDP-bound state, owing to GTPase activity of alpha-tubulin. This chain is Tubulin beta chain, found in Bombyx mori (Silk moth).